Reading from the N-terminus, the 640-residue chain is 1-deoxy-D-xylulose-5-phosphate synthase (640 aa).

Thiamine diphosphate is bound by residues H72 and 113–115 (GHA). Position 144 (D144) interacts with Mg(2+). Thiamine diphosphate-binding positions include 145 to 146 (GA), N174, Y287, and E370. N174 contributes to the Mg(2+) binding site.

It belongs to the transketolase family. DXPS subfamily. As to quaternary structure, homodimer. It depends on Mg(2+) as a cofactor. Requires thiamine diphosphate as cofactor.

The enzyme catalyses D-glyceraldehyde 3-phosphate + pyruvate + H(+) = 1-deoxy-D-xylulose 5-phosphate + CO2. It participates in metabolic intermediate biosynthesis; 1-deoxy-D-xylulose 5-phosphate biosynthesis; 1-deoxy-D-xylulose 5-phosphate from D-glyceraldehyde 3-phosphate and pyruvate: step 1/1. In terms of biological role, catalyzes the acyloin condensation reaction between C atoms 2 and 3 of pyruvate and glyceraldehyde 3-phosphate to yield 1-deoxy-D-xylulose-5-phosphate (DXP). The polypeptide is 1-deoxy-D-xylulose-5-phosphate synthase (Synechococcus sp. (strain RCC307)).